A 36-amino-acid chain; its full sequence is Mu/kappa-theraphotoxin-Ap1a (36 aa).

Cystine bridges form between Cys-3–Cys-18, Cys-10–Cys-23, and Cys-17–Cys-30. Phenylalanine amide is present on Phe-36.

It belongs to the neurotoxin 10 (Hwtx-1) family. Expressed by the venom gland.

The protein resides in the secreted. Inhibitor of voltage-gated potassium and sodium channels. Among other potassium channels, it selectively inhibits Kv10.1/KCNH1/EAG1 (IC(50)=236 nM) by shifting the voltage dependence of channel activation in a depolarising direction, it shows a maximum inhibition of 80% at saturating concentrations, it shows fast on-rates, and is poorly reversible. It also slightly affects channel inactivation, when the membrane is highly depolarised (&gt;+80 mV). It shows similar potency on Nav1.7/SCN9A (IC(50)=222 nM) and lower potency on Nav1.2/SCN2A (IC(50)=519 nM). The polypeptide is Mu/kappa-theraphotoxin-Ap1a (Avicularia purpurea (Ecuadorian purple pinktoe tarantula)).